Reading from the N-terminus, the 241-residue chain is Small ribosomal subunit protein uS3 (241 aa).

In terms of domain architecture, KH type-2 spans 39–108 (IREGVLKLLK…NLKVEVKVIE (70 aa)). Residues 215-241 (SQRVSEKAPMNNDRRFNNKNNNRGGRK) form a disordered region. Over residues 232–241 (NKNNNRGGRK) the composition is skewed to low complexity.

It belongs to the universal ribosomal protein uS3 family. Part of the 30S ribosomal subunit. Forms a tight complex with proteins S10 and S14.

Its function is as follows. Binds the lower part of the 30S subunit head. Binds mRNA in the 70S ribosome, positioning it for translation. The protein is Small ribosomal subunit protein uS3 of Mesoplasma florum (Acholeplasma florum).